The following is a 266-amino-acid chain: Probable phosphoadenosine phosphosulfate reductase (266 aa).

Positions 219–246 (TQPVREGEDERAGRWRGREKTECGLHSH) are disordered. Residues 223–243 (REGEDERAGRWRGREKTECGL) show a composition bias toward basic and acidic residues.

The protein belongs to the PAPS reductase family. CysH subfamily.

The protein resides in the cytoplasm. Its subcellular location is the nucleus. The catalysed reaction is [thioredoxin]-disulfide + sulfite + adenosine 3',5'-bisphosphate + 2 H(+) = [thioredoxin]-dithiol + 3'-phosphoadenylyl sulfate. It functions in the pathway sulfur metabolism; hydrogen sulfide biosynthesis; sulfite from sulfate: step 3/3. Functionally, the NADP dependent reduction of PAPS into sulfite involves thioredoxin which probably plays the role of a thiol carrier. Required for methionine synthesis. The polypeptide is Probable phosphoadenosine phosphosulfate reductase (met16) (Schizosaccharomyces pombe (strain 972 / ATCC 24843) (Fission yeast)).